The primary structure comprises 243 residues: CTD nuclear envelope phosphatase 1 homolog (243 aa).

A helical membrane pass occupies residues 11 to 27; the sequence is ALLLLLSKVWTCICFMF. An FCP1 homology domain is found at 56–223; that stretch reads SLVQRKTLVL…LSLLPMLDAL (168 aa).

It belongs to the dullard family.

Its subcellular location is the membrane. It carries out the reaction O-phospho-L-seryl-[protein] + H2O = L-seryl-[protein] + phosphate. It catalyses the reaction O-phospho-L-threonyl-[protein] + H2O = L-threonyl-[protein] + phosphate. Its function is as follows. Serine/threonine protein phosphatase that may dephosphorylate and activate lipin-like phosphatases. Lipins are phosphatidate phosphatases that catalyze the conversion of phosphatidic acid to diacylglycerol and control the metabolism of fatty acids at different levels. May indirectly modulate the lipid composition of nuclear and/or endoplasmic reticulum membranes and be required for proper nuclear membrane morphology and/or dynamics. May also indirectly regulate the production of lipid droplets and triacylglycerol. This is CTD nuclear envelope phosphatase 1 homolog (l(1)G0269) from Drosophila pseudoobscura pseudoobscura (Fruit fly).